A 619-amino-acid polypeptide reads, in one-letter code: DNA mismatch repair protein MutL (619 aa).

This sequence belongs to the DNA mismatch repair MutL/HexB family.

Functionally, this protein is involved in the repair of mismatches in DNA. It is required for dam-dependent methyl-directed DNA mismatch repair. May act as a 'molecular matchmaker', a protein that promotes the formation of a stable complex between two or more DNA-binding proteins in an ATP-dependent manner without itself being part of a final effector complex. The chain is DNA mismatch repair protein MutL from Myxococcus xanthus (strain DK1622).